Reading from the N-terminus, the 88-residue chain is MSLLDYFRSNKKQSTAQLAKERLQIIVAHERSSRGGPDYLPQLKQDILDVIRKYVQIDPDKITVQLDKKSDELSVLELNITFADDKKG.

This sequence belongs to the MinE family.

Prevents the cell division inhibition by proteins MinC and MinD at internal division sites while permitting inhibition at polar sites. This ensures cell division at the proper site by restricting the formation of a division septum at the midpoint of the long axis of the cell. The sequence is that of Cell division topological specificity factor from Aeromonas hydrophila subsp. hydrophila (strain ATCC 7966 / DSM 30187 / BCRC 13018 / CCUG 14551 / JCM 1027 / KCTC 2358 / NCIMB 9240 / NCTC 8049).